Here is a 1311-residue protein sequence, read N- to C-terminus: Sterol regulatory element-binding protein cleavage-activating protein (1311 aa).

Residues 1–18 (MPLIDKLRERISRAFYSH) are Cytoplasmic-facing. A helical membrane pass occupies residues 19-39 (GLLCASYPIPIIILTALCILA). Over 40–277 (SCYPLLKLPL…HIVHVHFKEE (238 aa)) the chain is Lumenal. Residues 46 to 282 (KLPLPGTGPV…HFKEEIGIAE (237 aa)) are loop-1. Asn242 and Asn261 each carry an N-linked (GlcNAc...) asparagine glycan. A helical transmembrane segment spans residues 278–298 (IGIAELIPLVTTYIILFAYIY). Residues 282-440 (ELIPLVTTYI…MFFFTTVLSI (159 aa)) form the SSD domain. Residues 299–310 (FSTRKIDLVKSK) are Cytoplasmic-facing. A helical membrane pass occupies residues 311–331 (WGLALAAVVTVLSSLLMSVGL). At 332-342 (CTLFGLTPTLN) the chain is on the lumenal side. The helical transmembrane segment at 343 to 363 (GGEIFPYLVVVIGLENVLVLT) threads the bilayer. At 364 to 399 (KSVVSTPVDLEVKLRIAQGLRNESWFIMKNMATELG) the chain is on the cytoplasmic side. Residues 400 to 420 (IILIGYFTLVPAIQEFCLFAV) traverse the membrane as a helical segment. A topological domain (lumenal) is located at residue Val421. Residues 422 to 442 (GLVSDFFLQMFFFTTVLSIDI) form a helical membrane-spanning segment. Topologically, residues 443 to 512 (RRMELADLNK…FFARTRLAQR (70 aa)) are cytoplasmic. The ER export signal signature appears at 445-450 (MELADL). A helical transmembrane segment spans residues 513–533 (IIMAGTVVWIGILVYTDPAGL). The interval 529-726 (DPAGLRNYLT…QTPADVTLYK (198 aa)) is loop-7. Topologically, residues 534 to 723 (RNYLTVHVTE…TENQTPADVT (190 aa)) are lumenal. 2 N-linked (GlcNAc...) asparagine glycosylation sites follow: Asn583 and Asn651. Residues 724–744 (LYKVAALGLASGIFLVLFFFL) form a helical membrane-spanning segment. The Cytoplasmic segment spans residues 745-1311 (LYRLLCPKNY…YVPSVLEKLD (567 aa)). The segment at 747–1311 (RLLCPKNYGQ…YVPSVLEKLD (565 aa)) is interaction with srebf. WD repeat units follow at residues 790–827 (GHHMDIECLASDKMLLVSCCLAGQIRVWDAQSGDCLTI), 997–1034 (SFESSVWSLGLQGNLIVVGRSNGNLEVWDAIEGSLRCS), 1037–1076 (DGQSGITSLVFLNHRVVVARLNGSMDFYCLDSQKSSNQLQ), 1109–1146 (AHRKPITALKAAAGRLVTGSQDHTVRIYRLEDACCLFT), 1149–1187 (GHSGGITAIYIDETMVLASGGQDGAICLWDVLTGSRVSH), 1190–1227 (GHRGDVTSLLCTASCVISSGLDDVISIWDRSTAIKLYS), and 1230–1267 (QDLGCGSSLGLISDNLLVTGGLGCVSFWDVGYGDLLQT).

This sequence belongs to the WD repeat SCAP family. In terms of assembly, membrane region forms a homotetramer. Component of the SCAP-SREBP complex (composed of SCAP and srebf1/srebp1 or srebf2/srebp2). Forms a ternary complex with insig1 or insig2 through its transmembrane domains at high sterol concentrations. Interacts with the SEC23-SEC24 complex.

It is found in the endoplasmic reticulum membrane. It localises to the golgi apparatus membrane. The protein resides in the cytoplasmic vesicle. The protein localises to the COPII-coated vesicle membrane. Functionally, escort protein required for cholesterol as well as lipid homeostasis. Regulates export of the SCAP-SREBP complex from the endoplasmic reticulum to the Golgi upon low cholesterol, thereby regulating the processing of sterol regulatory element-binding proteins (SREBPs) SREBF1/SREBP1 and SREBF2/SREBP2. At high sterol concentrations, formation of a ternary complex with INSIG (INSIG1 or INSIG2) leads to mask the ER export signal in SCAP, promoting retention of the complex in the endoplasmic reticulum. Low sterol concentrations trigger release of INSIG, a conformational change in the SSD domain of SCAP, unmasking of the ER export signal, promoting recruitment into COPII-coated vesicles and transport of the SCAP-SREBP to the Golgi: in the Golgi, SREBPs are then processed, releasing the transcription factor fragment of SREBPs from the membrane, its import into the nucleus and up-regulation of LDLR, INSIG1 and the mevalonate pathway. Binds cholesterol via its SSD domain. The polypeptide is Sterol regulatory element-binding protein cleavage-activating protein (Xenopus laevis (African clawed frog)).